Reading from the N-terminus, the 335-residue chain is Glycerol-3-phosphate dehydrogenase [NAD(P)+] (335 aa).

Residues S15, Y16, R36, and K110 each contribute to the NADPH site. Sn-glycerol 3-phosphate is bound by residues K110, G139, and T141. Residue A143 coordinates NADPH. Residues K195, D248, S258, R259, and N260 each coordinate sn-glycerol 3-phosphate. Catalysis depends on K195, which acts as the Proton acceptor. R259 serves as a coordination point for NADPH. The NADPH site is built by V283 and E285.

It belongs to the NAD-dependent glycerol-3-phosphate dehydrogenase family.

It localises to the cytoplasm. The catalysed reaction is sn-glycerol 3-phosphate + NAD(+) = dihydroxyacetone phosphate + NADH + H(+). It carries out the reaction sn-glycerol 3-phosphate + NADP(+) = dihydroxyacetone phosphate + NADPH + H(+). The protein operates within membrane lipid metabolism; glycerophospholipid metabolism. Functionally, catalyzes the reduction of the glycolytic intermediate dihydroxyacetone phosphate (DHAP) to sn-glycerol 3-phosphate (G3P), the key precursor for phospholipid synthesis. This chain is Glycerol-3-phosphate dehydrogenase [NAD(P)+], found in Pseudoalteromonas translucida (strain TAC 125).